Reading from the N-terminus, the 232-residue chain is UPF0758 protein BH3032 (232 aa).

The region spanning 107 to 229 (VIRTPEDVSR…FVSLKEKGHL (123 aa)) is the MPN domain. 3 residues coordinate Zn(2+): His-178, His-180, and Asp-191. The JAMM motif signature appears at 178–191 (HNHPSGDPTPSRED).

The protein belongs to the UPF0758 family.

The chain is UPF0758 protein BH3032 from Halalkalibacterium halodurans (strain ATCC BAA-125 / DSM 18197 / FERM 7344 / JCM 9153 / C-125) (Bacillus halodurans).